A 298-amino-acid polypeptide reads, in one-letter code: Sulfofructose kinase (298 aa).

6-deoxy-6-sulfo-D-fructose contacts are provided by D13, K27, G39, S95, and R138. 4 residues coordinate ATP: T212, G214, G217, and G243. D244 is a 6-deoxy-6-sulfo-D-fructose binding site.

Belongs to the carbohydrate kinase PfkB family. As to quaternary structure, homodimer.

The catalysed reaction is 6-deoxy-6-sulfo-D-fructose + ATP = 6-deoxy-6-sulfo-D-fructose 1-phosphate + ADP + H(+). With respect to regulation, strongly inhibited by ADP. Activated by sulfoquinovose (SQ), sulfolactaldehyde (SLA) and dihydroxyacetone phosphate (DHAP) (through effects on KM) and by fructose 6-phosphate (F6P), fructose bisphosphate (FBP), phosphoenolpyruvate (PEP) and citrate (through effects on kcat/KM). In terms of biological role, phosphorylates 6-deoxy-6-sulfo-D-fructose (SF) to 6-deoxy-6-sulfo-D-fructose 1-phosphate (SFP). Cannot phosphorylate fructose 6-phosphate. The polypeptide is Sulfofructose kinase (yihV) (Escherichia coli (strain K12)).